Consider the following 638-residue polypeptide: Pentatricopeptide repeat-containing protein At3g49730 (638 aa).

12 PPR repeats span residues 130-164, 166-200, 201-231, 235-269, 270-304, 305-340, 341-375, 376-410, 411-445, 446-480, 483-513, and 520-554; these read SYEV…NPEL, EPEL…GLEP, DEYV…MREK, NLRY…GLEP, DIVV…GFEP, NVNC…GCEA, DIVT…GVMP, SQVT…GCHP, DLLI…GLSP, GVDT…GIFS, QYGT…ISNK, and NVSA…DLMP. The segment at 604 to 638 is disordered; it reads LIEKAKPKGNKEGKKKGTDHQRYKGRGERSRAKAL.

Belongs to the PPR family. P subfamily.

This Arabidopsis thaliana (Mouse-ear cress) protein is Pentatricopeptide repeat-containing protein At3g49730.